The sequence spans 419 residues: Endothiapepsin (419 aa).

The signal sequence occupies residues 1–20 (MSSPLKNALVTAMLAGGALS). A propeptide spans 21 to 89 (SPTKQHVGIP…QNSTSGLAER (69 aa)) (activation peptide). The region spanning 106 to 417 (YITPVQIGTP…GATTPTLGFA (312 aa)) is the Peptidase A1 domain. Catalysis depends on residues aspartate 124 and serine 288. An intrachain disulfide couples cysteine 344 to cysteine 379.

This sequence belongs to the peptidase A1 family.

The catalysed reaction is Hydrolysis of proteins with specificity similar to that of pepsin A, prefers hydrophobic residues at P1 and P1', but does not cleave 14-Ala-|-Leu-15 in the B chain of insulin or Z-Glu-Tyr. Clots milk.. The sequence is that of Endothiapepsin (EAPA) from Cryphonectria parasitica (Chestnut blight fungus).